A 263-amino-acid chain; its full sequence is 4-hydroxy-tetrahydrodipicolinate reductase (263 aa).

NAD(+) is bound by residues 7–12 (GASGRM) and aspartate 33. Arginine 34 serves as a coordination point for NADP(+). NAD(+) contacts are provided by residues 96-98 (GTT) and 120-123 (APNM). The active-site Proton donor/acceptor is the histidine 153. Histidine 154 lines the (S)-2,3,4,5-tetrahydrodipicolinate pocket. Catalysis depends on lysine 157, which acts as the Proton donor. 163–164 (GT) serves as a coordination point for (S)-2,3,4,5-tetrahydrodipicolinate.

The protein belongs to the DapB family.

Its subcellular location is the cytoplasm. The enzyme catalyses (S)-2,3,4,5-tetrahydrodipicolinate + NAD(+) + H2O = (2S,4S)-4-hydroxy-2,3,4,5-tetrahydrodipicolinate + NADH + H(+). It catalyses the reaction (S)-2,3,4,5-tetrahydrodipicolinate + NADP(+) + H2O = (2S,4S)-4-hydroxy-2,3,4,5-tetrahydrodipicolinate + NADPH + H(+). The protein operates within amino-acid biosynthesis; L-lysine biosynthesis via DAP pathway; (S)-tetrahydrodipicolinate from L-aspartate: step 4/4. In terms of biological role, catalyzes the conversion of 4-hydroxy-tetrahydrodipicolinate (HTPA) to tetrahydrodipicolinate. The chain is 4-hydroxy-tetrahydrodipicolinate reductase from Ralstonia nicotianae (strain ATCC BAA-1114 / GMI1000) (Ralstonia solanacearum).